A 793-amino-acid polypeptide reads, in one-letter code: E3 UFM1-protein ligase 1 (793 aa).

Position 2 is an N-acetylalanine (alanine 2). The tract at residues 2–200 (ADAWEEIRRL…RGLFSAITRP (199 aa)) is mediates interaction with DDRGK1. The interval 2–212 (ADAWEEIRRL…VNSLVSKYGF (211 aa)) is required for E3 UFM1-protein ligase activity. Residues 121 to 250 (DRLSEEVNDK…KAVFVPDIYS (130 aa)) are involved in CDK5RAP3-binding. Positions 200–400 (PTAVNSLVSK…NPVHLITEED (201 aa)) are mediates interaction with TRIP4. The segment at 410 to 473 (VNTNKKDKKD…SSHAGKKKPD (64 aa)) is disordered. Residue arginine 433 is modified to Omega-N-methylarginine. Serine 458 and serine 462 each carry phosphoserine. Residues 490-683 (IPDAPEEFIS…QLKVTEDPAL (194 aa)) are mediates interaction with CDK5RAP3. The residue at position 535 (threonine 535) is a Phosphothreonine. Residues 742–769 (NKKSGQGEDPSSDDLDKEQHDVTNTTRK) are disordered. 2 positions are modified to phosphoserine: serine 752 and serine 753. A compositionally biased stretch (basic and acidic residues) spans 758 to 769 (KEQHDVTNTTRK).

Belongs to the UFL1 family. In terms of assembly, catalytic component of the UFM1 ribosome E3 ligase (UREL) complex, composed of UFL1, DDRGK1 and CDK5RAP3. Interacts with E2-like enzyme UFC1. Interacts with RELA. Interacts with NBN; promoting recruitment to double-strand breaks following DNA damage. Interacts (when phosphorylated) with YWHAG/14-3-3-gamma; sequestering UFL1 and preventing its association with PDCD1/PD-1 substrate. In terms of processing, ubiquitinated, leading to its degradation by the proteasome. Interaction with CDK5RAP3 protects both proteins against ubiquitination and degradation via the proteasome. Phosphorylated at Ser-462 by ATM, enhancing protein ligase activity and promoting ATM activation in a positive feedback loop. Phosphorylation at Thr-535 by AMPK promotes its interaction with YWHAG/14-3-3-gamma, thereby preventing UFL1 association with PDCD1/PD-1 substrate. In terms of tissue distribution, ubiquitously expressed with expression detected in brain, skeletal muscle, lung, heart, gall bladder, liver, small intestine, pancreas, spleen and kidney (at protein level). At 8 weeks after birth, high expression in the Purkinje cell layer of the cerebellum.

The protein resides in the endoplasmic reticulum membrane. It is found in the cytoplasm. The protein localises to the cytosol. Its subcellular location is the nucleus. It localises to the chromosome. Functionally, E3 protein ligase that mediates ufmylation, the covalent attachment of the ubiquitin-like modifier UFM1 to lysine residues on target proteins, and which plays a key role in various processes, such as ribosome recycling, response to DNA damage, interferon response or reticulophagy (also called ER-phagy). Catalyzes ufmylation of many protein, such as CD274/PD-L1, CDK5RAP3, CYB5R3, DDRGK1, EIF6, histone H4, MRE11, P4HB, PDCD1/PD-1, TRIP4, RPN1, RPS20/uS10, RPL10/uL16, RPL26/uL24, SYVN1/HRD1 and TP53/p53. As part of the UREL complex, plays a key role in ribosome recycling by catalyzing mono-ufmylation of RPL26/uL24 subunit of the 60S ribosome. Ufmylation of RPL26/uL24 occurs on free 60S ribosomes following ribosome dissociation: it weakens the junction between post-termination 60S subunits and SEC61 translocons, promoting release and recycling of the large ribosomal subunit from the endoplasmic reticulum membrane. Ufmylation of RPL26/uL24 and subsequent 60S ribosome recycling either take place after normal termination of translation or after ribosome stalling during cotranslational translocation at the endoplasmic reticulum. Involved in reticulophagy in response to endoplasmic reticulum stress by mediating ufmylation of proteins such as CYB5R3 and RPN1, thereby promoting lysosomal degradation of ufmylated proteins. Ufmylation in response to endoplasmic reticulum stress is essential for processes such as hematopoiesis, blood vessel morphogenesis or inflammatory response. Mediates ufmylation of DDRGK1 and CDK5RAP3; the role of these modifications is however unclear: as both DDRGK1 and CDK5RAP3 act as substrate adapters for ufmylation, it is uncertain whether ufmylation of these proteins is, a collateral effect or is required for ufmylation. Acts as a negative regulator of T-cell activation by mediating ufmylation and stabilization of PDCD1/PD-1. Also involved in the response to DNA damage: recruited to double-strand break sites following DNA damage and mediates monoufmylation of histone H4 and ufmylation of MRE11. Mediates ufmylation of TP53/p53, promoting its stability. Catalyzes ufmylation of TRIP4, thereby playing a role in nuclear receptor-mediated transcription. Required for hematopoietic stem cell function and hematopoiesis. The protein is E3 UFM1-protein ligase 1 of Rattus norvegicus (Rat).